The following is a 205-amino-acid chain: MIWQDGKLLSPGAVLPGDRVYHGMRIWDPGHSKVAALCHIHGEPPVRNARILYLGAAAGSTVSFLSDYAEVVYAVEFSPRPVRSLIRLARARKNIIPLFEDARYPERYLPFVEPVDLLIQDIAQRDQAEIALRNLIFLKQGGHLILFLKLLSMGTDKKREDRIVEVVNLLEHGGITDPAVLDLDRYHTGHTAVWGIYSLSKNFEK.

S-adenosyl-L-methionine contacts are provided by residues 60–61 (ST), 76–77 (EF), 101–102 (DA), and 121–124 (DIAQ).

Belongs to the methyltransferase superfamily. Fibrillarin family. In terms of assembly, interacts with nop5. Component of box C/D small ribonucleoprotein (sRNP) particles that contain rpl7ae, FlpA and nop5, plus a guide RNA.

Its function is as follows. Involved in pre-rRNA and tRNA processing. Utilizes the methyl donor S-adenosyl-L-methionine to catalyze the site-specific 2'-hydroxyl methylation of ribose moieties in rRNA and tRNA. Site specificity is provided by a guide RNA that base pairs with the substrate. Methylation occurs at a characteristic distance from the sequence involved in base pairing with the guide RNA. The protein is Fibrillarin-like rRNA/tRNA 2'-O-methyltransferase of Methanospirillum hungatei JF-1 (strain ATCC 27890 / DSM 864 / NBRC 100397 / JF-1).